The primary structure comprises 476 residues: Glycogen synthase (476 aa).

K15 lines the ADP-alpha-D-glucose pocket.

The protein belongs to the glycosyltransferase 1 family. Bacterial/plant glycogen synthase subfamily.

It carries out the reaction [(1-&gt;4)-alpha-D-glucosyl](n) + ADP-alpha-D-glucose = [(1-&gt;4)-alpha-D-glucosyl](n+1) + ADP + H(+). The protein operates within glycan biosynthesis; glycogen biosynthesis. In terms of biological role, synthesizes alpha-1,4-glucan chains using ADP-glucose. The polypeptide is Glycogen synthase (Streptococcus equi subsp. equi (strain 4047)).